An 826-amino-acid polypeptide reads, in one-letter code: Ribosome-releasing factor 2, mitochondrial (826 aa).

The N-terminal 44 residues, 1–44 (MIVRNLLGKNRLCCLQPKLLLSTLSQRPQLQLSLQLLCRATRLY), are a transit peptide targeting the mitochondrion. The tr-type G domain occupies 53-340 (PKTRNIGIIA…GITNYLPSPL (288 aa)). Residues 62–69 (AHIDAGKT), 126–130 (DTPGH), and 180–183 (NKMD) contribute to the GTP site.

This sequence belongs to the TRAFAC class translation factor GTPase superfamily. Classic translation factor GTPase family. EF-G/EF-2 subfamily.

It is found in the mitochondrion. In terms of biological role, mitochondrial GTPase that mediates the disassembly of ribosomes from messenger RNA at the termination of mitochondrial protein biosynthesis. Not involved in the GTP-dependent ribosomal translocation step during translation elongation. The chain is Ribosome-releasing factor 2, mitochondrial from Lodderomyces elongisporus (strain ATCC 11503 / CBS 2605 / JCM 1781 / NBRC 1676 / NRRL YB-4239) (Yeast).